The primary structure comprises 511 residues: Phosphoenolpyruvate carboxylase (511 aa).

Belongs to the PEPCase type 2 family. Homotetramer. It depends on Mg(2+) as a cofactor.

The enzyme catalyses oxaloacetate + phosphate = phosphoenolpyruvate + hydrogencarbonate. Functionally, catalyzes the irreversible beta-carboxylation of phosphoenolpyruvate (PEP) to form oxaloacetate (OAA), a four-carbon dicarboxylic acid source for the tricarboxylic acid cycle. The protein is Phosphoenolpyruvate carboxylase of Saccharolobus islandicus (strain Y.G.57.14 / Yellowstone #1) (Sulfolobus islandicus).